The sequence spans 28 residues: fur leader peptide (28 aa).

Its function is as follows. Cotranscribed with fur, it is essential for fur translation. The fur ribosomal binding site (RBS) is occluded by the 5'-mRNA secondary structure, which is opened by uof translation. The chain is fur leader peptide (uof) from Escherichia coli (strain K12).